A 188-amino-acid chain; its full sequence is Probable manganese efflux pump MntP (188 aa).

5 helical membrane-spanning segments follow: residues 3 to 23 (ITAT…ASIG), 66 to 86 (LEWN…RMII), 106 to 128 (WLLV…GLAF), 143 to 163 (ATLI…SIIG), and 168 to 188 (ILGG…HFHG).

This sequence belongs to the MntP (TC 9.B.29) family.

It localises to the cell inner membrane. In terms of biological role, probably functions as a manganese efflux pump. The chain is Probable manganese efflux pump MntP from Shigella flexneri serotype 5b (strain 8401).